Here is an 83-residue protein sequence, read N- to C-terminus: MAHKKGQGASRNGRDSESKRLGLKVGAGQRVSTGSILVRQRGTKWHPAVNVGRGKDDTLFALADGIVVMKKTDRTYVSVIPQA.

The disordered stretch occupies residues 1–25 (MAHKKGQGASRNGRDSESKRLGLKV).

The protein belongs to the bacterial ribosomal protein bL27 family.

This Chlamydia trachomatis serovar L2 (strain ATCC VR-902B / DSM 19102 / 434/Bu) protein is Large ribosomal subunit protein bL27.